The following is a 788-amino-acid chain: ATP-dependent 6-phosphofructokinase, platelet type (788 aa).

An N-acetylmethionine modification is found at Met1. An N-terminal catalytic PFK domain 1 region spans residues 1–399; that stretch reads MSDQDSSTSS…NLNTYKRLAI (399 aa). Ser2, Ser6, Ser12, and Ser21 each carry phosphoserine. ATP is bound by residues Gly34, 97-98, and 127-130; these read RC and GDGS. Position 128 (Asp128) interacts with Mg(2+). The residue at position 142 (Ser142) is a Phosphoserine. Residues 173-175, Arg210, 217-219, Glu273, Arg301, and 307-310 each bind substrate; these read SID, MGR, and HVQR. Asp175 (proton acceptor) is an active-site residue. Ser386 carries the phosphoserine modification. Lys395 is subject to N6-acetyllysine. An interdomain linker region spans residues 400–411; that stretch reads KEPDDKIPKSNC. The interval 412-788 is C-terminal regulatory PFK domain 2; that stretch reads NVAIINVGAP…VHNHGELSAI (377 aa). Residue Arg481 coordinates beta-D-fructose 2,6-bisphosphate. Lys486 is subject to N6-acetyllysine. Beta-D-fructose 2,6-bisphosphate-binding positions include 538–542, Arg576, 583–585, and Glu639; these read TVSNN and MGG. Ser540 carries O-linked (GlcNAc) serine glycosylation. Tyr651 bears the Phosphotyrosine mark. Residues Arg665 and 671–674 contribute to the beta-D-fructose 2,6-bisphosphate site; that span reads HMQQ. At Lys688 the chain carries N6-acetyllysine. Arg744 is a beta-D-fructose 2,6-bisphosphate binding site.

It belongs to the phosphofructokinase type A (PFKA) family. ATP-dependent PFK group I subfamily. Eukaryotic two domain clade 'E' sub-subfamily. Homo- and heterotetramers. Phosphofructokinase (PFK) enzyme functions as a tetramer composed of different combinations of 3 types of subunits, called PFKM (M), PFKL (L) and PFKP (P). The composition of the PFK tetramer differs according to the tissue type it is present in. The kinetic and regulatory properties of the tetrameric enzyme are dependent on the subunit composition, hence can vary across tissues. Interacts with ATG4B; promoting phosphorylation of ATG4B. The cofactor is Mg(2+). GlcNAcylation decreases enzyme activity. In terms of processing, phosphorylation at Ser-386 promotes interaction with ATG4B. Expressed at high level in neuroendocrine tissues.

The protein resides in the cytoplasm. It catalyses the reaction beta-D-fructose 6-phosphate + ATP = beta-D-fructose 1,6-bisphosphate + ADP + H(+). It participates in carbohydrate degradation; glycolysis; D-glyceraldehyde 3-phosphate and glycerone phosphate from D-glucose: step 3/4. With respect to regulation, allosterically activated by ADP, AMP, or fructose 2,6-bisphosphate, and allosterically inhibited by ATP or citrate. In terms of biological role, catalyzes the phosphorylation of D-fructose 6-phosphate to fructose 1,6-bisphosphate by ATP, the first committing step of glycolysis. The sequence is that of ATP-dependent 6-phosphofructokinase, platelet type (Pfkp) from Rattus norvegicus (Rat).